A 661-amino-acid chain; its full sequence is uncharacterized protein (661 aa).

The next 7 helical transmembrane spans lie at 37 to 57 (VFLG…LFLS), 87 to 107 (INSP…AVFI), 120 to 140 (WLLL…NVIL), 158 to 178 (VFWQ…PIIV), 243 to 263 (LLDI…LYTI), 266 to 286 (TLMW…IAIG), and 341 to 361 (FNLL…YNYF). The region spanning 123–410 (LGVLLSLLFV…VTNQIQNITE (288 aa)) is the ABC transmembrane type-1 domain. The ABC transporter domain occupies 453–659 (VALENVTLSP…AEGRWQISPI (207 aa)). 487–494 (GPSGSGKS) serves as a coordination point for ATP.

The protein belongs to the ABC transporter superfamily.

It localises to the cell inner membrane. This is an uncharacterized protein from Synechocystis sp. (strain ATCC 27184 / PCC 6803 / Kazusa).